A 583-amino-acid chain; its full sequence is Arginine--tRNA ligase (583 aa).

The 'HIGH' region signature appears at 123-133 (PNIAKEMHVGH).

Belongs to the class-I aminoacyl-tRNA synthetase family. Monomer.

The protein resides in the cytoplasm. It carries out the reaction tRNA(Arg) + L-arginine + ATP = L-arginyl-tRNA(Arg) + AMP + diphosphate. The polypeptide is Arginine--tRNA ligase (Blochmanniella floridana).